Here is a 186-residue protein sequence, read N- to C-terminus: Elongation factor P (186 aa).

Belongs to the elongation factor P family.

It is found in the cytoplasm. Its pathway is protein biosynthesis; polypeptide chain elongation. In terms of biological role, involved in peptide bond synthesis. Stimulates efficient translation and peptide-bond synthesis on native or reconstituted 70S ribosomes in vitro. Probably functions indirectly by altering the affinity of the ribosome for aminoacyl-tRNA, thus increasing their reactivity as acceptors for peptidyl transferase. The chain is Elongation factor P from Prochlorococcus marinus (strain MIT 9211).